The primary structure comprises 366 residues: Uroporphyrinogen decarboxylase (366 aa).

Substrate-binding positions include 28–32, aspartate 78, tyrosine 160, threonine 215, and histidine 333; that span reads RQAGR.

Belongs to the uroporphyrinogen decarboxylase family. Homodimer.

The protein resides in the cytoplasm. The enzyme catalyses uroporphyrinogen III + 4 H(+) = coproporphyrinogen III + 4 CO2. The protein operates within porphyrin-containing compound metabolism; protoporphyrin-IX biosynthesis; coproporphyrinogen-III from 5-aminolevulinate: step 4/4. In terms of biological role, catalyzes the decarboxylation of four acetate groups of uroporphyrinogen-III to yield coproporphyrinogen-III. The polypeptide is Uroporphyrinogen decarboxylase (Paraburkholderia xenovorans (strain LB400)).